The following is a 96-amino-acid chain: Co-chaperonin GroES (96 aa).

The protein belongs to the GroES chaperonin family. As to quaternary structure, heptamer of 7 subunits arranged in a ring. Interacts with the chaperonin GroEL.

The protein resides in the cytoplasm. Together with the chaperonin GroEL, plays an essential role in assisting protein folding. The GroEL-GroES system forms a nano-cage that allows encapsulation of the non-native substrate proteins and provides a physical environment optimized to promote and accelerate protein folding. GroES binds to the apical surface of the GroEL ring, thereby capping the opening of the GroEL channel. This chain is Co-chaperonin GroES, found in Actinobacillus succinogenes (strain ATCC 55618 / DSM 22257 / CCUG 43843 / 130Z).